The sequence spans 291 residues: Ribonuclease Z (291 aa).

Positions 60, 62, 64, 65, 132, 200, and 256 each coordinate Zn(2+). The active-site Proton acceptor is the Asp64.

Belongs to the RNase Z family. Homodimer. Requires Zn(2+) as cofactor.

It catalyses the reaction Endonucleolytic cleavage of RNA, removing extra 3' nucleotides from tRNA precursor, generating 3' termini of tRNAs. A 3'-hydroxy group is left at the tRNA terminus and a 5'-phosphoryl group is left at the trailer molecule.. Zinc phosphodiesterase, which displays some tRNA 3'-processing endonuclease activity. Probably involved in tRNA maturation, by removing a 3'-trailer from precursor tRNA. This Metallosphaera sedula (strain ATCC 51363 / DSM 5348 / JCM 9185 / NBRC 15509 / TH2) protein is Ribonuclease Z.